Consider the following 348-residue polypeptide: UDP-3-O-acylglucosamine N-acyltransferase (348 aa).

The Proton acceptor role is filled by H257.

Belongs to the transferase hexapeptide repeat family. LpxD subfamily. Homotrimer.

The catalysed reaction is a UDP-3-O-[(3R)-3-hydroxyacyl]-alpha-D-glucosamine + a (3R)-hydroxyacyl-[ACP] = a UDP-2-N,3-O-bis[(3R)-3-hydroxyacyl]-alpha-D-glucosamine + holo-[ACP] + H(+). It functions in the pathway bacterial outer membrane biogenesis; LPS lipid A biosynthesis. In terms of biological role, catalyzes the N-acylation of UDP-3-O-acylglucosamine using 3-hydroxyacyl-ACP as the acyl donor. Is involved in the biosynthesis of lipid A, a phosphorylated glycolipid that anchors the lipopolysaccharide to the outer membrane of the cell. The polypeptide is UDP-3-O-acylglucosamine N-acyltransferase (Bartonella henselae (strain ATCC 49882 / DSM 28221 / CCUG 30454 / Houston 1) (Rochalimaea henselae)).